Reading from the N-terminus, the 222-residue chain is Histone H1.5 (222 aa).

A compositionally biased stretch (low complexity) spans 1 to 16; it reads MSETAPAETTAPAPVE. The interval 1–55 is disordered; it reads MSETAPAETTAPAPVEKSPAKKKTKKAGAAKRKATGPPVSELITKAVSASKERGG. At Ser2 the chain carries N-acetylserine. Phosphoserine is present on Ser2. An N6-acetyllysine modification is found at Lys17. At Ser18 the chain carries Phosphoserine. Basic residues predominate over residues 20–34; that stretch reads AKKKTKKAGAAKRKA. Lys26 carries the N6-methyllysine modification. Lys33 carries the N6-(beta-hydroxybutyryl)lysine; alternate modification. Lys33 bears the N6-succinyllysine; alternate mark. Thr35 bears the Phosphothreonine mark. An H15 domain is found at 35–108; that stretch reads TGPPVSELIT…GASGSFKLNK (74 aa). Lys45 is modified (N6-acetyllysine). Position 51 is an N6-(beta-hydroxybutyryl)lysine (Lys51). Residue Arg53 is modified to Citrulline. Residue Lys63 is modified to N6-(beta-hydroxybutyryl)lysine. Lys74 carries the post-translational modification N6-acetyllysine. Residues Lys84, Lys89, and Lys105 each carry the N6-(beta-hydroxybutyryl)lysine modification. Residues 94–222 form a disordered region; it reads QTKGTGASGS…KVKKAVSKKK (129 aa). The segment covering 118 to 129 has biased composition (basic residues); it reads KAKKTGAAKAKK. Phosphothreonine occurs at positions 134 and 151. Residues 136–157 are compositionally biased toward basic residues; the sequence is KKPKKTAGAKKTVKKTPKKAKK. The residue at position 164 (Lys164) is an N6-acetyllysine. Over residues 165–183 the composition is skewed to basic residues; the sequence is KVTKSPKKAKAAAKPKKAT. Phosphoserine is present on residues Ser169 and Ser185. Positions 190-222 are enriched in basic residues; that stretch reads KAVKSKASKPKVTKPKAAKPKAAKVKKAVSKKK.

It belongs to the histone H1/H5 family. As to quaternary structure, interacts with MSX1. In terms of processing, H1 histones are progressively phosphorylated during the cell cycle, becoming maximally phosphorylated during late G2 phase and M phase, and being dephosphorylated sharply thereafter. Post-translationally, citrullination at Arg-53 (H1R54ci) by PADI4 takes place within the DNA-binding site of H1 and results in its displacement from chromatin and global chromatin decondensation, thereby promoting pluripotency and stem cell maintenance.

It is found in the nucleus. The protein resides in the chromosome. Functionally, histone H1 protein binds to linker DNA between nucleosomes forming the macromolecular structure known as the chromatin fiber. Histones H1 are necessary for the condensation of nucleosome chains into higher-order structured fibers. Also acts as a regulator of individual gene transcription through chromatin remodeling, nucleosome spacing and DNA methylation. This is Histone H1.5 (H1-5) from Rattus norvegicus (Rat).